A 668-amino-acid chain; its full sequence is DNA ligase (668 aa).

Residues 32 to 36 (DAEYD), 81 to 82 (SL), and glutamate 113 contribute to the NAD(+) site. Lysine 115 serves as the catalytic N6-AMP-lysine intermediate. 4 residues coordinate NAD(+): arginine 136, glutamate 173, lysine 289, and lysine 313. 4 residues coordinate Zn(2+): cysteine 407, cysteine 410, cysteine 425, and cysteine 431. The 79-residue stretch at 590-668 (ASEQPFAGKT…EEELQQALQG (79 aa)) folds into the BRCT domain.

The protein belongs to the NAD-dependent DNA ligase family. LigA subfamily. It depends on Mg(2+) as a cofactor. The cofactor is Mn(2+).

It catalyses the reaction NAD(+) + (deoxyribonucleotide)n-3'-hydroxyl + 5'-phospho-(deoxyribonucleotide)m = (deoxyribonucleotide)n+m + AMP + beta-nicotinamide D-nucleotide.. In terms of biological role, DNA ligase that catalyzes the formation of phosphodiester linkages between 5'-phosphoryl and 3'-hydroxyl groups in double-stranded DNA using NAD as a coenzyme and as the energy source for the reaction. It is essential for DNA replication and repair of damaged DNA. The polypeptide is DNA ligase (Aeromonas hydrophila subsp. hydrophila (strain ATCC 7966 / DSM 30187 / BCRC 13018 / CCUG 14551 / JCM 1027 / KCTC 2358 / NCIMB 9240 / NCTC 8049)).